Here is a 129-residue protein sequence, read N- to C-terminus: Glycine cleavage system H protein (129 aa).

Positions 24–106 (TYTVGITEHA…YAGGWIFKIK (83 aa)) constitute a Lipoyl-binding domain. Lys-65 bears the N6-lipoyllysine mark.

Belongs to the GcvH family. The glycine cleavage system is composed of four proteins: P, T, L and H. Requires (R)-lipoate as cofactor.

The glycine cleavage system catalyzes the degradation of glycine. The H protein shuttles the methylamine group of glycine from the P protein to the T protein. This is Glycine cleavage system H protein from Escherichia fergusonii (strain ATCC 35469 / DSM 13698 / CCUG 18766 / IAM 14443 / JCM 21226 / LMG 7866 / NBRC 102419 / NCTC 12128 / CDC 0568-73).